We begin with the raw amino-acid sequence, 367 residues long: Carbamoyl-phosphate synthase (367 aa).

An ATP-grasp domain is found at 111 to 296; it reads KEFYNEIGVP…SLCELVNMAA (186 aa). Position 137–186 (137–186) interacts with ATP; it reads KMEFPVVLKQGQGQGGKDIKVAESLDDVKEYFEEFDHALCEKFIEGSEIS. Asp253, Glu267, and Asn269 together coordinate Mg(2+). Mn(2+) is bound by residues Asp253, Glu267, and Asn269.

It belongs to the small carbamoyl-phosphate synthase family. Forms homodimers and homotetramers (dimers of dimers). Mg(2+) serves as cofactor. The cofactor is Mn(2+).

The enzyme catalyses hydrogencarbonate + NH4(+) + 2 ATP = carbamoyl phosphate + 2 ADP + phosphate + 2 H(+). Its function is as follows. Catalyzes the synthesis of carbamoyl phosphate from ATP, ammonium and bicarbonate. Proceeds via a three-step mechanism, i.e. the phosphorylation of hydrogencarbonate to carboxyphosphate, a nucleophilic attack of ammonia on carboxyphosphate yielding carbamate, and the phosphorylation of carbamate forming carbamoyl phosphate. In M.smithii, the predominant archaeon in the human gut, one function of this enzyme may be to sequester ammonia, a scarce nutrient in the intestine which is the major source of nitrogen in M.smithii for the biosynthesis of nucleotides, amino acids, and many other metabolites. The protein is Carbamoyl-phosphate synthase of Methanobrevibacter smithii (strain ATCC 35061 / DSM 861 / OCM 144 / PS).